Consider the following 276-residue polypeptide: MPELPEVHTIVQDLKQSRLIGKKIISTEIFWPKTLAVPTPEIFCQQVQGQSIQNVDRRGKYIIFQLSNQMFLIVHLRMTGRFQFVTSQTPASPYVRIQFNFENGDQLRFHDTRKFGRWYLVSDVEEIIGHLGPEPLLSSFTFELFEDMMKNRKTLLKSLLLDQSFIVGLGNIYVDEALWEAKLHPLIPANQINLKHLKILYHSIKYVLEKGIQARGTTLGPGRTHYYRLDGSKGEHQTLLNVFRKTGHPCPRCGHLIEKLIVAQRSTHICPICQKK.

Residue Pro2 is the Schiff-base intermediate with DNA of the active site. Glu3 (proton donor) is an active-site residue. Lys60 serves as the catalytic Proton donor; for beta-elimination activity. DNA contacts are provided by Arg113 and Arg152. The FPG-type zinc-finger motif lies at 241-275; the sequence is NVFRKTGHPCPRCGHLIEKLIVAQRSTHICPICQK. Arg265 functions as the Proton donor; for delta-elimination activity in the catalytic mechanism.

Belongs to the FPG family. As to quaternary structure, monomer. Requires Zn(2+) as cofactor.

The catalysed reaction is Hydrolysis of DNA containing ring-opened 7-methylguanine residues, releasing 2,6-diamino-4-hydroxy-5-(N-methyl)formamidopyrimidine.. The enzyme catalyses 2'-deoxyribonucleotide-(2'-deoxyribose 5'-phosphate)-2'-deoxyribonucleotide-DNA = a 3'-end 2'-deoxyribonucleotide-(2,3-dehydro-2,3-deoxyribose 5'-phosphate)-DNA + a 5'-end 5'-phospho-2'-deoxyribonucleoside-DNA + H(+). Its function is as follows. Involved in base excision repair of DNA damaged by oxidation or by mutagenic agents. Acts as a DNA glycosylase that recognizes and removes damaged bases. Has a preference for oxidized purines, such as 7,8-dihydro-8-oxoguanine (8-oxoG). Has AP (apurinic/apyrimidinic) lyase activity and introduces nicks in the DNA strand. Cleaves the DNA backbone by beta-delta elimination to generate a single-strand break at the site of the removed base with both 3'- and 5'-phosphates. In Protochlamydia amoebophila (strain UWE25), this protein is Formamidopyrimidine-DNA glycosylase.